Here is a 546-residue protein sequence, read N- to C-terminus: Immunoglobulin-like domain-containing receptor 1 (546 aa).

The signal sequence occupies residues 1–23 (MAWPKLPAPWLLLCTWLPAGCLS). Positions 24 to 162 (LLVTVQHTER…TSGDPDKEVK (139 aa)) constitute an Ig-like V-type domain. The Extracellular segment spans residues 24–167 (LLVTVQHTER…DKEVKLIVLH (144 aa)). Cys-45 and Cys-145 form a disulfide bridge. The chain crosses the membrane as a helical span at residues 168 to 188 (WLTVIFIILGALLLLLLIGVC). Residues 189 to 546 (WCQCCPQYCC…SSHSGRSVVI (358 aa)) lie on the Cytoplasmic side of the membrane. Positions 399–546 (WSGRHRSSRL…SSHSGRSVVI (148 aa)) are disordered. Positions 442 to 457 (RCQERPRRPSPRESTQ) are enriched in basic and acidic residues. Over residues 458-467 (RHGRRRRHRS) the composition is skewed to basic residues. Phosphoserine is present on residues Ser-499 and Ser-501. Over residues 527–539 (GSVERRSEKDSSH) the composition is skewed to basic and acidic residues.

It belongs to the immunoglobulin superfamily. LISCH7 family. Homooligomer. Interacts with MARVELD2 and OCLN; the interaction is required to recruit MARVELD2 to tricellular contacts. Interacts (via C-terminus) with TRA2A, TRA2B and SRSF1. Interacts with PLSCR1. In terms of tissue distribution, mainly expressed in prostate and to a lower extent in testis, pancreas, kidney, heart and liver.

Its subcellular location is the cell membrane. The protein resides in the cell junction. It localises to the tight junction. It is found in the cytoplasm. The protein localises to the cytosol. Maintains epithelial barrier function by recruiting MARVELD2/tricellulin to tricellular tight junctions (tTJs). Crucial for normal hearing by maintaining the structural and functional integrity of tTJs, which are critical for the survival of auditory neurosensory HCs. Mediates fatty acids and lipoproteins-stimulated CCK/cholecystokinin secretion in the small intestine. In the inner ear, may regulate alternative pre-mRNA splicing via binding to TRA2A, TRA2B and SRSF1. Its function is as follows. (Microbial infection) Promotes influenza virus infection by inhibiting viral nucleoprotein NP binding to PLSCR1 and thereby PLSCR1-mediated antiviral activity. The polypeptide is Immunoglobulin-like domain-containing receptor 1 (Homo sapiens (Human)).